An 82-amino-acid polypeptide reads, in one-letter code: Large ribosomal subunit protein uL24c (82 aa).

This sequence belongs to the universal ribosomal protein uL24 family. As to quaternary structure, part of the 50S ribosomal subunit.

The protein resides in the plastid. Its subcellular location is the chloroplast. Functionally, one of two assembly initiator proteins, it binds directly to the 5'-end of the 23S rRNA, where it nucleates assembly of the 50S subunit. The chain is Large ribosomal subunit protein uL24c (rpl24) from Phaeodactylum tricornutum (strain CCAP 1055/1).